Here is a 227-residue protein sequence, read N- to C-terminus: MIQGDLVQIQELNNEIGRFLIEIARKAIKEEFKLDKLDLSNYNNPILDKKGLAFVTLEKITYNTSSLRGCIGYVEAVAPLKQIVASAAKAAAFSDPRFNPLQKDELSEIIIEVTVLTKPEEIKVKDRWDLPKIIKVGEDGLIVEKGILHSGLLLPQVPMEYCWDEETFLAETCIKASLEPDCWLDNSVRIKRFHGIIFRETRPDGSDIIVVKPSDIKCKLNELLNNF.

One can recognise an AMMECR1 domain in the interval 15 to 209 (EIGRFLIEIA…ETRPDGSDII (195 aa)).

In Saccharolobus islandicus (strain M.14.25 / Kamchatka #1) (Sulfolobus islandicus), this protein is Protein M1425_1941.